Consider the following 449-residue polypeptide: Phosphoglucosamine mutase (449 aa).

Residue serine 104 is the Phosphoserine intermediate of the active site. Mg(2+)-binding residues include serine 104, aspartate 243, aspartate 245, and aspartate 247. A Phosphoserine modification is found at serine 104.

It belongs to the phosphohexose mutase family. The cofactor is Mg(2+). Post-translationally, activated by phosphorylation.

The catalysed reaction is alpha-D-glucosamine 1-phosphate = D-glucosamine 6-phosphate. In terms of biological role, catalyzes the conversion of glucosamine-6-phosphate to glucosamine-1-phosphate. The sequence is that of Phosphoglucosamine mutase from Xanthomonas euvesicatoria pv. vesicatoria (strain 85-10) (Xanthomonas campestris pv. vesicatoria).